Reading from the N-terminus, the 337-residue chain is Calcium-binding protein 39-like (337 aa).

The protein belongs to the Mo25 family. As to quaternary structure, component of a trimeric complex composed of STK11/LKB1, STRAD (STRADA or STRADB) and CAB39/MO25 (CAB39/MO25alpha or CAB39L/MO25beta): the complex tethers STK11/LKB1 in the cytoplasm and stimulates its catalytic activity.

In terms of biological role, component of a complex that binds and activates STK11/LKB1. In the complex, required to stabilize the interaction between CAB39/MO25 (CAB39/MO25alpha or CAB39L/MO25beta) and STK11/LKB1. The chain is Calcium-binding protein 39-like (Cab39l) from Mus musculus (Mouse).